We begin with the raw amino-acid sequence, 41 residues long: Histone H3.2 (41 aa).

The segment at 1–41 (MARTKQTARKSTGAKAPRKQLASKAARKSAPATGGIKKPHR) is disordered.

Belongs to the histone H3 family. As to quaternary structure, the nucleosome is a histone octamer containing two molecules each of H2A, H2B, H3 and H4 assembled in one H3-H4 heterotetramer and two H2A-H2B heterodimers. The octamer wraps approximately 147 bp of DNA.

The protein resides in the nucleus. It is found in the chromosome. Core component of nucleosome. Nucleosomes wrap and compact DNA into chromatin, limiting DNA accessibility to the cellular machineries which require DNA as a template. Histones thereby play a central role in transcription regulation, DNA repair, DNA replication and chromosomal stability. DNA accessibility is regulated via a complex set of post-translational modifications of histones, also called histone code, and nucleosome remodeling. This is Histone H3.2 from Tetrahymena australis.